The chain runs to 149 residues: Pleckstrin homology domain-containing family J member 1 (149 aa).

The 94-residue stretch at 15 to 108 (RAEKAAELGM…WVEALTNASY (94 aa)) folds into the PH domain.

The sequence is that of Pleckstrin homology domain-containing family J member 1 (plekhj1) from Xenopus laevis (African clawed frog).